The chain runs to 108 residues: Curli assembly protein CsgC (108 aa).

An N-terminal signal peptide occupies residues 1–8 (MHTLLLLA).

This sequence belongs to the CsgC/AgfC family.

It is found in the periplasm. Functionally, plays a role in the extracellular assembly of CsgA into thin aggregative fimbriae (Tafi) fibers. Assembly may also require CsgE. Tafi are thought to be assembled via an extracellular nucleation-precipitation (ENP) pathway, and possibly also via an intracellular non-CsgC-dependent pathway. This chain is Curli assembly protein CsgC, found in Salmonella arizonae (strain ATCC BAA-731 / CDC346-86 / RSK2980).